A 193-amino-acid chain; its full sequence is MALPAIHNWEPYEDSLIRIKHSCFAMHELYRERYLLARTRMMYYDVPIIVLSSVSSVFIAGGDAYMSKSMVQILTCIMSLCVGIIGSLKKFFRVDENREQCLETYKDLFRMFCELAIVMDMPSTSRPGDPQQYSTETSSKYAEIMQRSLVLEGQRTKYNPIYDDHNPLPPEKKKSILSRTRSTKLSSGEITPV.

Residues 158–193 (YNPIYDDHNPLPPEKKKSILSRTRSTKLSSGEITPV) form a disordered region. A compositionally biased stretch (basic and acidic residues) spans 162–174 (YDDHNPLPPEKKK). Over residues 177–193 (LSRTRSTKLSSGEITPV) the composition is skewed to polar residues.

This is an uncharacterized protein from Micromonas pusilla (Picoplanktonic green alga).